Here is a 376-residue protein sequence, read N- to C-terminus: Dual-specificity RNA methyltransferase RlmN (376 aa).

Glu96 (proton acceptor) is an active-site residue. The 240-residue stretch at 102–341 (DEDRATLCVS…VVVRKTRGDD (240 aa)) folds into the Radical SAM core domain. A disulfide bridge connects residues Cys109 and Cys346. [4Fe-4S] cluster contacts are provided by Cys116, Cys120, and Cys123. S-adenosyl-L-methionine is bound by residues 170–171 (GE), Ser202, 224–226 (SLH), and Asn303. Catalysis depends on Cys346, which acts as the S-methylcysteine intermediate.

This sequence belongs to the radical SAM superfamily. RlmN family. It depends on [4Fe-4S] cluster as a cofactor.

It localises to the cytoplasm. It carries out the reaction adenosine(2503) in 23S rRNA + 2 reduced [2Fe-2S]-[ferredoxin] + 2 S-adenosyl-L-methionine = 2-methyladenosine(2503) in 23S rRNA + 5'-deoxyadenosine + L-methionine + 2 oxidized [2Fe-2S]-[ferredoxin] + S-adenosyl-L-homocysteine. The catalysed reaction is adenosine(37) in tRNA + 2 reduced [2Fe-2S]-[ferredoxin] + 2 S-adenosyl-L-methionine = 2-methyladenosine(37) in tRNA + 5'-deoxyadenosine + L-methionine + 2 oxidized [2Fe-2S]-[ferredoxin] + S-adenosyl-L-homocysteine. In terms of biological role, specifically methylates position 2 of adenine 2503 in 23S rRNA and position 2 of adenine 37 in tRNAs. m2A2503 modification seems to play a crucial role in the proofreading step occurring at the peptidyl transferase center and thus would serve to optimize ribosomal fidelity. In Pseudoalteromonas atlantica (strain T6c / ATCC BAA-1087), this protein is Dual-specificity RNA methyltransferase RlmN.